A 1040-amino-acid polypeptide reads, in one-letter code: Multidrug resistance protein MdtB (1040 aa).

12 helical membrane-spanning segments follow: residues 25-45, 347-367, 369-389, 396-416, 440-460, 472-492, 537-557, 863-883, 888-908, 910-930, 968-988, and 998-1018; these read LLMA…PVAA, LMLA…NIPA, IIPG…MVFL, LTLM…IVVI, IGFT…PLLF, FAVT…TLTP, WLTL…WIVI, LGST…VLGV, FIHP…ALLA, IIAG…LIGI, ILMT…STGV, and IAMV…TPVI.

This sequence belongs to the resistance-nodulation-cell division (RND) (TC 2.A.6) family. MdtB subfamily. As to quaternary structure, part of a tripartite efflux system composed of MdtA, MdtB and MdtC. MdtB forms a heteromultimer with MdtC.

It localises to the cell inner membrane. The chain is Multidrug resistance protein MdtB from Salmonella gallinarum (strain 287/91 / NCTC 13346).